The following is a 98-amino-acid chain: NADH-ubiquinone oxidoreductase chain 4L (98 aa).

Transmembrane regions (helical) follow at residues 1 to 21, 29 to 49, and 61 to 81; these read MPLI…GLLM, ALLC…LLAL, and IILL…LVMI.

Belongs to the complex I subunit 4L family. As to quaternary structure, core subunit of respiratory chain NADH dehydrogenase (Complex I) which is composed of 45 different subunits.

The protein resides in the mitochondrion inner membrane. It carries out the reaction a ubiquinone + NADH + 5 H(+)(in) = a ubiquinol + NAD(+) + 4 H(+)(out). Its function is as follows. Core subunit of the mitochondrial membrane respiratory chain NADH dehydrogenase (Complex I) which catalyzes electron transfer from NADH through the respiratory chain, using ubiquinone as an electron acceptor. Part of the enzyme membrane arm which is embedded in the lipid bilayer and involved in proton translocation. The polypeptide is NADH-ubiquinone oxidoreductase chain 4L (MT-ND4L) (Kogia breviceps (Pygmy sperm whale)).